Reading from the N-terminus, the 332-residue chain is Geranylgeranyl pyrophosphate synthase dpasD (332 aa).

Residues Lys-55, Arg-58, and His-87 each coordinate isopentenyl diphosphate. Mg(2+) contacts are provided by Asp-94 and Asp-98. A dimethylallyl diphosphate-binding site is contributed by Arg-103. Arg-104 is an isopentenyl diphosphate binding site. Dimethylallyl diphosphate-binding residues include Lys-181, Thr-182, and Gln-215. Position 218 (Asp-218) interacts with Mg(2+). Residues Asn-222, Lys-232, and Lys-242 each coordinate dimethylallyl diphosphate.

Belongs to the FPP/GGPP synthase family. Mg(2+) serves as cofactor.

It catalyses the reaction isopentenyl diphosphate + dimethylallyl diphosphate = (2E)-geranyl diphosphate + diphosphate. The catalysed reaction is isopentenyl diphosphate + (2E)-geranyl diphosphate = (2E,6E)-farnesyl diphosphate + diphosphate. The enzyme catalyses isopentenyl diphosphate + (2E,6E)-farnesyl diphosphate = (2E,6E,10E)-geranylgeranyl diphosphate + diphosphate. It participates in secondary metabolite biosynthesis; terpenoid biosynthesis. Geranylgeranyl pyrophosphate synthase; part of the gene cluster that mediates the biosynthesis of the diterpenoid pyrones subglutinols A and B. The first step of the pathway is the synthesis of the alpha-pyrone moiety by the polyketide synthase dpasA via condensation of one acetyl-CoA starter unit with 3 malonyl-CoA units and 2 methylations. The alpha-pyrone is then combined with geranylgeranyl pyrophosphate (GGPP) formed by the GGPP synthase dpasD through the action of the prenyltransferase dpasC to yield a linear alpha-pyrone diterpenoid. Subsequent steps in the diterpenoid pyrone biosynthetic pathway involve the decalin core formation, which is initiated by the epoxidation of the C10-C11 olefin by the FAD-dependent oxidoreductase dpasE, and is followed by a cyclization cascade catalyzed by the terpene cyclase dpasB. The FAD-linked oxidoreductase dpasF is then involved in tetrahydrofuran (THF) ring formation at the C5 unit to complete the formation of subglutinols A and B. DpasF also possesses an additional catalytic ability of multi-step oxidations to generate a new DDP analog with an enone system at the C5 named FDDP A. The sequence is that of Geranylgeranyl pyrophosphate synthase dpasD from Apiospora sacchari (Arthrinium sacchari).